A 159-amino-acid polypeptide reads, in one-letter code: 2-C-methyl-D-erythritol 2,4-cyclodiphosphate synthase (159 aa).

The a divalent metal cation site is built by D10 and H12. Residues 10–12 (DVH) and 37–38 (HS) each bind 4-CDP-2-C-methyl-D-erythritol 2-phosphate. Residue H45 participates in a divalent metal cation binding. 4-CDP-2-C-methyl-D-erythritol 2-phosphate-binding positions include 59 to 61 (DIG), 64 to 68 (FLDTD), 103 to 109 (AQAPKML), 135 to 138 (TTTE), F142, and R145.

This sequence belongs to the IspF family. As to quaternary structure, homotrimer. A divalent metal cation serves as cofactor.

The enzyme catalyses 4-CDP-2-C-methyl-D-erythritol 2-phosphate = 2-C-methyl-D-erythritol 2,4-cyclic diphosphate + CMP. Its pathway is isoprenoid biosynthesis; isopentenyl diphosphate biosynthesis via DXP pathway; isopentenyl diphosphate from 1-deoxy-D-xylulose 5-phosphate: step 4/6. Functionally, involved in the biosynthesis of isopentenyl diphosphate (IPP) and dimethylallyl diphosphate (DMAPP), two major building blocks of isoprenoid compounds. Catalyzes the conversion of 4-diphosphocytidyl-2-C-methyl-D-erythritol 2-phosphate (CDP-ME2P) to 2-C-methyl-D-erythritol 2,4-cyclodiphosphate (ME-CPP) with a corresponding release of cytidine 5-monophosphate (CMP). The sequence is that of 2-C-methyl-D-erythritol 2,4-cyclodiphosphate synthase from Francisella tularensis subsp. holarctica (strain FTNF002-00 / FTA).